The following is a 140-amino-acid chain: ATP synthase epsilon chain (140 aa).

The protein belongs to the ATPase epsilon chain family. F-type ATPases have 2 components, CF(1) - the catalytic core - and CF(0) - the membrane proton channel. CF(1) has five subunits: alpha(3), beta(3), gamma(1), delta(1), epsilon(1). CF(0) has three main subunits: a, b and c.

The protein resides in the cell inner membrane. Functionally, produces ATP from ADP in the presence of a proton gradient across the membrane. This chain is ATP synthase epsilon chain, found in Xylella fastidiosa (strain Temecula1 / ATCC 700964).